A 232-amino-acid polypeptide reads, in one-letter code: MSVHKTNDAFKVLMNSAKEPIVEDIPKKYRKQSFRDNLKVYIESPESYKNVIYYDDDVVLVRDMFPKSKMHLLLMTRDPHLTHVHPLEIMMKHRSLVEKLVSYVQGDLSGLIFDEARNCLSQQLTNEALCNYIKVGFHAGPSMNNLHLHIMTLDHVSPSLKNSAHYISFTSPFFVKIDTPTSNLPTRGTLTSLFQEDLKCWRCGETFGRHFTKLKAHLQEEYDDWLDKSVSM.

The HIT domain maps to 38 to 160 (LKVYIESPES…MTLDHVSPSL (123 aa)). Interaction with DNA stretches follow at residues 63–67 (DMFPK), 138–149 (HAGPSMNNLHLH), and 161–165 (KNSAH). The active-site Nucleophile is histidine 147. Residues cysteine 200 and cysteine 203 each contribute to the Zn(2+) site. The tract at residues 209 to 212 (RHFT) is interaction with DNA. Zn(2+)-binding residues include histidine 217 and glutamate 221.

As to quaternary structure, monomer.

It localises to the nucleus. It is found in the cytoplasm. The enzyme catalyses a 5'-end adenosine-5'-diphospho-5'-2'-deoxyribonucleoside-DNA + H2O = a 5'-end 5'-phospho-2'-deoxyribonucleoside-DNA + AMP + 2 H(+). The catalysed reaction is a 5'-end adenosine-5'-diphospho-5'-ribonucleoside-2'-deoxyribonucleotide-DNA + H2O = a 5'-end 5'-phospho-ribonucleoside-2'-deoxyribonucleotide-DNA + AMP + 2 H(+). It catalyses the reaction a 3'-end 2'-deoxyribonucleotide-3'-diphospho-5'-guanosine-DNA + H2O = a 3'-end 2'-deoxyribonucleotide 3'-phosphate-DNA + GMP + 2 H(+). In terms of biological role, DNA-binding protein involved in single-strand DNA break repair, double-strand DNA break repair and base excision repair. Resolves abortive DNA ligation intermediates formed either at base excision sites, or when DNA ligases attempt to repair non-ligatable breaks induced by reactive oxygen species. Catalyzes the release of adenylate groups covalently linked to 5'-phosphate termini, resulting in the production of 5'-phosphate termini that can be efficiently rejoined. Likewise, catalyzes the release of 3'-linked guanosine (DNAppG) and inosine (DNAppI) from DNA, but has higher specific activity with 5'-linked adenosine (AppDNA). The sequence is that of Aprataxin-like protein (hnt3) from Schizosaccharomyces pombe (strain 972 / ATCC 24843) (Fission yeast).